The chain runs to 323 residues: Breast cancer metastasis-suppressor 1-like protein-A (323 aa).

Positions methionine 1 to glutamate 15 are enriched in basic and acidic residues. The tract at residues methionine 1–cysteine 52 is disordered. Positions methionine 16 to aspartate 51 are enriched in acidic residues. Coiled coils occupy residues glutamate 50 to arginine 81 and glutamine 156 to glutamate 178.

The protein belongs to the BRMS1 family.

Its subcellular location is the nucleus. In terms of biological role, involved in the histone deacetylase (HDAC1)-dependent transcriptional repression activity. This chain is Breast cancer metastasis-suppressor 1-like protein-A (brms1la), found in Danio rerio (Zebrafish).